A 2979-amino-acid polypeptide reads, in one-letter code: Polyketide synthase-nonribosomal peptide synthetase TwmB (2979 aa).

Residues 5–435 (GAEIAIIGSG…GTNAHAILES (431 aa)) form the Ketosynthase family 3 (KS3) domain. Catalysis depends on for beta-ketoacyl synthase activity residues Cys176, His315, and His355. Residues 549 to 864 (VFTGQGAQWA…PYTGLFTRGV (316 aa)) are malonyl-CoA:ACP transacylase (MAT) domain. Ser643 (for malonyltransferase activity) is an active-site residue. Residues 936–1070 (HDLLGHLTPN…GRVRIHLGEA (135 aa)) are N-terminal hotdog fold. The tract at residues 936 to 1234 (HDLLGHLTPN…ECVPFSRQTA (299 aa)) is dehydratase (DH) domain. Positions 936 to 1235 (HDLLGHLTPN…CVPFSRQTAK (300 aa)) constitute a PKS/mFAS DH domain. His968 serves as the catalytic Proton acceptor; for dehydratase activity. A C-terminal hotdog fold region spans residues 1085–1235 (LVSVSEKKFY…CVPFSRQTAK (151 aa)). Asp1141 (proton donor; for dehydratase activity) is an active-site residue. An inactive methyltransferase (MT) domain region spans residues 1387 to 1572 (NFTAHLAGIL…GIDTSTVEQP (186 aa)). Positions 2098 to 2271 (TYWLVGLTGG…AASVMDIGAV (174 aa)) are ketoreductase (KR)domain. Residues 2380–2465 (RNNEEAYGIV…ELVDTATEAI (86 aa)) enclose the Carrier domain. At Ser2425 the chain carries O-(pantetheine 4'-phosphoryl)serine. The tract at residues 2476–2497 (YPAEQTSSQNSDSGQDMASSFD) is disordered. Positions 2479–2497 (EQTSSQNSDSGQDMASSFD) are enriched in polar residues. Residues 2534–2970 (KSIPVSFTQA…MTLGQAALAE (437 aa)) form a condensation region.

Interacts with TwmE. Requires pantetheine 4'-phosphate as cofactor.

It catalyses the reaction 5-aminopentanoate + 7 malonyl-CoA + acetyl-CoA + 11 NADPH + 17 H(+) = wortmanamide A + 7 CO2 + 11 NADP(+) + 8 CoA + 6 H2O. The enzyme catalyses 5-aminopentanoate + 8 malonyl-CoA + acetyl-CoA + 13 NADPH + 20 H(+) = wortmanamide B + 8 CO2 + 13 NADP(+) + 9 CoA + 7 H2O. It functions in the pathway secondary metabolite biosynthesis. In terms of biological role, polyketide synthase-nonribosomal peptide synthetase; part of the gene cluster that mediates the biosynthesis of wortmanamides A and B, reduced long-chain polyketides amidated with a specific omega-amino acid, 5-aminopentanoic acid (5PA). The PKS modules of TwmB are involved in the synthesis of the polyketide backbone, whereas the non-canonical C domain of TwmB is a bonafide condensation domain that specifically selects 5PA and catalyzes amidation to release polyketide chain. The C domain clearly prefers C16 and C18 fatty acyl substrates, which is consistent with simultaneous formation of both octaketide and nonaketide acyl amides wortmanamides A and B. Because TwmB lacks a designated enoylreductase (ER) domain, the required activity is provided the enoyl reductase TwmE. The roles of the remaining enzymes have still to be clarified. The polypeptide is Polyketide synthase-nonribosomal peptide synthetase TwmB (Talaromyces wortmannii (Penicillium wortmannii)).